Reading from the N-terminus, the 279-residue chain is Methyltransferase ausD (279 aa).

S-adenosyl-L-methionine contacts are provided by residues 124–125 (DI) and 152–153 (DV).

The protein belongs to the class I-like SAM-binding methyltransferase superfamily. As to quaternary structure, homodimer.

It participates in secondary metabolite biosynthesis; terpenoid biosynthesis. Functionally, methyltransferase; part of the gene cluster A that mediates the biosynthesis of the fungal meroterpenoid acetoxydehydroaustin. The first step of the pathway is the synthesis of 3,5-dimethylorsellinic acid by the polyketide synthase ausA. 3,5-dimethylorsellinic acid is then prenylated by the polyprenyl transferase ausN. Further epoxidation by the FAD-dependent monooxygenase ausM and cyclization by the probable terpene cyclase ausL lead to the formation of protoaustinoid A. Protoaustinoid A is then oxidized to spiro-lactone preaustinoid A3 by the combined action of the FAD-binding monooxygenases ausB and ausC, and the dioxygenase ausE. Acid-catalyzed keto-rearrangement and ring contraction of the tetraketide portion of preaustinoid A3 by ausJ lead to the formation of preaustinoid A4. The aldo-keto reductase ausK, with the help of ausH, is involved in the next step by transforming preaustinoid A4 into isoaustinone which is in turn hydroxylated by the P450 monooxygenase ausI to form austinolide. The cytochrome P450 monooxygenase ausG then modifies austinolide to austinol. Austinol is further acetylated to austin by the O-acetyltransferase ausP, which spontaneously changes to dehydroaustin. The cytochrome P450 monooxygenase then converts dehydroaustin is into 7-dehydrodehydroaustin. The hydroxylation catalyzed by ausR permits the second O-acetyltransferase ausQ to add an additional acetyl group to the molecule, leading to the formation of acetoxydehydroaustin. Due to genetic rearrangements of the clusters and the subsequent loss of some enzymes, the end product of the Penicillium brasilianum austinoid biosynthesis clusters is acetoxydehydroaustin. In Penicillium brasilianum, this protein is Methyltransferase ausD.